The following is a 126-amino-acid chain: Small ribosomal subunit protein uS13 (126 aa).

Residues 98–126 (VRGQSTKNNARTRKGKRKTVANKKKAAKK) are disordered. A compositionally biased stretch (basic residues) spans 107–126 (ARTRKGKRKTVANKKKAAKK).

The protein belongs to the universal ribosomal protein uS13 family. As to quaternary structure, part of the 30S ribosomal subunit. Forms a loose heterodimer with protein S19. Forms two bridges to the 50S subunit in the 70S ribosome.

In terms of biological role, located at the top of the head of the 30S subunit, it contacts several helices of the 16S rRNA. In the 70S ribosome it contacts the 23S rRNA (bridge B1a) and protein L5 of the 50S subunit (bridge B1b), connecting the 2 subunits; these bridges are implicated in subunit movement. Contacts the tRNAs in the A and P-sites. The chain is Small ribosomal subunit protein uS13 from Amoebophilus asiaticus (strain 5a2).